The chain runs to 148 residues: Macrodomain Ter protein (148 aa).

Belongs to the MatP family. In terms of assembly, homodimer.

Its subcellular location is the cytoplasm. Functionally, required for spatial organization of the terminus region of the chromosome (Ter macrodomain) during the cell cycle. Prevents early segregation of duplicated Ter macrodomains during cell division. Binds specifically to matS, which is a 13 bp signature motif repeated within the Ter macrodomain. This is Macrodomain Ter protein from Aliivibrio salmonicida (strain LFI1238) (Vibrio salmonicida (strain LFI1238)).